Here is a 106-residue protein sequence, read N- to C-terminus: Flagellar transcriptional regulator FlhD (106 aa).

Belongs to the FlhD family. Homodimer; disulfide-linked. Forms a heterohexamer composed of two FlhC and four FlhD subunits. Each FlhC binds a FlhD dimer, forming a heterotrimer, and a hexamer assembles by dimerization of two heterotrimers.

It is found in the cytoplasm. Its function is as follows. Functions in complex with FlhC as a master transcriptional regulator that regulates transcription of several flagellar and non-flagellar operons by binding to their promoter region. Activates expression of class 2 flagellar genes, including fliA, which is a flagellum-specific sigma factor that turns on the class 3 genes. Also regulates genes whose products function in a variety of physiological pathways. The polypeptide is Flagellar transcriptional regulator FlhD (Burkholderia mallei (strain SAVP1)).